Here is a 36-residue protein sequence, read N- to C-terminus: Photosystem I reaction center subunit VIII (36 aa).

The helical transmembrane segment at 9 to 29 (ILVPLVGLIFPAFSMALFFLY) threads the bilayer.

This sequence belongs to the PsaI family.

It is found in the plastid. The protein localises to the chloroplast thylakoid membrane. Functionally, may help in the organization of the PsaL subunit. This Thalassiosira pseudonana (Marine diatom) protein is Photosystem I reaction center subunit VIII.